The chain runs to 181 residues: Large ribosomal subunit protein uL5 (181 aa).

Belongs to the universal ribosomal protein uL5 family. Part of the 50S ribosomal subunit; part of the 5S rRNA/L5/L18/L25 subcomplex. Contacts the 5S rRNA and the P site tRNA. Forms a bridge to the 30S subunit in the 70S ribosome.

Its function is as follows. This is one of the proteins that bind and probably mediate the attachment of the 5S RNA into the large ribosomal subunit, where it forms part of the central protuberance. In the 70S ribosome it contacts protein S13 of the 30S subunit (bridge B1b), connecting the 2 subunits; this bridge is implicated in subunit movement. Contacts the P site tRNA; the 5S rRNA and some of its associated proteins might help stabilize positioning of ribosome-bound tRNAs. The protein is Large ribosomal subunit protein uL5 of Helicobacter pylori (strain P12).